Consider the following 291-residue polypeptide: Protease HtpX homolog (291 aa).

Transmembrane regions (helical) follow at residues 4 to 24 and 39 to 59; these read IVLFLATNLAIVLVLSLTMRL and TSLLIFAAVMGFGGSLISLAI. Histidine 145 is a Zn(2+) binding site. Glutamate 146 is a catalytic residue. Histidine 149 provides a ligand contact to Zn(2+). A run of 2 helical transmembrane segments spans residues 156 to 176 and 195 to 215; these read VTLALIQGVVNTFVMFLSRII and FFVTMIVAELVLGILASIIVM. Glutamate 222 provides a ligand contact to Zn(2+).

It belongs to the peptidase M48B family. It depends on Zn(2+) as a cofactor.

The protein localises to the cell inner membrane. In Thiobacillus denitrificans (strain ATCC 25259 / T1), this protein is Protease HtpX homolog.